The primary structure comprises 444 residues: Deoxyguanosinetriphosphate triphosphohydrolase-like protein (444 aa).

A disordered region spans residues methionine 1–aspartate 28. Residues arginine 59–alanine 250 form the HD domain.

The protein belongs to the dGTPase family. Type 2 subfamily.

The chain is Deoxyguanosinetriphosphate triphosphohydrolase-like protein from Shewanella pealeana (strain ATCC 700345 / ANG-SQ1).